We begin with the raw amino-acid sequence, 602 residues long: Aspartate--tRNA(Asp/Asn) ligase (602 aa).

An L-aspartate-binding site is contributed by Glu-177. Residues 201–204 (QLFK) form an aspartate region. Arg-223 contributes to the L-aspartate binding site. ATP-binding positions include 223–225 (RDE) and Gln-232. Position 460 (His-460) interacts with L-aspartate. Glu-497 is an ATP binding site. Arg-504 is a binding site for L-aspartate. Residue 549–552 (GLDR) coordinates ATP.

It belongs to the class-II aminoacyl-tRNA synthetase family. Type 1 subfamily. Homodimer.

It is found in the cytoplasm. It catalyses the reaction tRNA(Asx) + L-aspartate + ATP = L-aspartyl-tRNA(Asx) + AMP + diphosphate. In terms of biological role, aspartyl-tRNA synthetase with relaxed tRNA specificity since it is able to aspartylate not only its cognate tRNA(Asp) but also tRNA(Asn). Reaction proceeds in two steps: L-aspartate is first activated by ATP to form Asp-AMP and then transferred to the acceptor end of tRNA(Asp/Asn). The protein is Aspartate--tRNA(Asp/Asn) ligase of Prochlorococcus marinus (strain MIT 9515).